A 757-amino-acid polypeptide reads, in one-letter code: MDVNPTLIFLKVPAQNAISTTFPYTGDPPYSHGTGTGYTMDTVNRTHQYSEKGKWTTNTETGAPQLNPIDGPLPEDNEPSGYAQTDCVLEAMAFLEESHPGIFENSCLETMEAVQQTRVDKLTQGRQTYDWTLNRNQPAATALANTIEVFRSNGLTANESGRLIDFLKDVMESMDKEEMEITTHFQRKRRVRDNMTKKMVTQRTIGKKKQRLNKRSYLIRALTLNTMTKDAERGKLRRRAIATPGMQIRGFVYFVETLARSICEKLEQSGLPVGGNEKKAKLANVVRKMMTNSQDTELSFTITGDNTKWNENQNPRMFLAMITYITRNQPEWFRNVLSIAPLMFSNKMARLGKGYMFESKSMKLRTQIPAEMLASIDLKYFNDSTRKKIEKIRPLLIDGTASLSPGMMMGMFNMLSTVLGVSILNLGQKRYTKTTYWWDGLQSSDDFALIVNAPNHEGIQAGVDRFYRTCKLVGINMSKKKSYINRTGTFEFTSFFYRYGFVANFSMELPSFGVSGINESADMSIGVTVIKNNMINNDLGPATAQMALQLFIKDYRYTYRCHRGDTQIQTRRSFELKKLWEQTRSKAGLLVSDGGPNLYNIRNLHIPEVCLKWELMDEDYQGRLCNPLNPFVSHKEIESVNNAVVMPAHGPAKSMEYDAVATTHSWIPKRNRSILNTSQRGILEDEQMYQKCCNLFEKFFPSSSYRRPVGISSMVEAMVSRARIDARIDFESGRIKKEEFAEIMKICSTIEELKRQK.

Short sequence motifs (nuclear localization signal) lie at residues 187-195 (RKRRVRDNM) and 203-216 (RTIG…NKRS). Residues 249–256 (RGFVYFVE) form a promoter-binding site region. The RdRp catalytic domain occupies 286–483 (VRKMMTNSQD…GINMSKKKSY (198 aa)).

It belongs to the influenza viruses polymerase PB1 family. In terms of assembly, influenza RNA polymerase is composed of three subunits: PB1, PB2 and PA. Interacts (via N-terminus) with PA (via C-terminus). Interacts (via C-terminus) with PB2 (via N-terminus); this interaction is essential for transcription initiation. Post-translationally, phosphorylated by host PRKCA.

Its subcellular location is the host nucleus. The protein localises to the host cytoplasm. The enzyme catalyses RNA(n) + a ribonucleoside 5'-triphosphate = RNA(n+1) + diphosphate. In terms of biological role, RNA-dependent RNA polymerase which is responsible for replication and transcription of virus RNA segments. The transcription of viral mRNAs occurs by a unique mechanism called cap-snatching. 5' methylated caps of cellular mRNAs are cleaved after 10-13 nucleotides by PA. In turn, these short capped RNAs are used as primers by PB1 for transcription of viral mRNAs. During virus replication, PB1 initiates RNA synthesis and copy vRNA into complementary RNA (cRNA) which in turn serves as a template for the production of more vRNAs. This is RNA-directed RNA polymerase catalytic subunit from Aves.